The primary structure comprises 178 residues: V-type proton ATPase subunit c''2 (178 aa).

Residues 1 to 24 (MSGVAIHASSWGAALVRISPYTFS) are Lumenal-facing. Residues 25–45 (AIGIAISIGVSVLGAAWGIYI) traverse the membrane as a helical segment. The Cytoplasmic segment spans residues 46 to 64 (TGSSLIGAAIEAPRITSKN). Residues 65-85 (LISVIFCEAVAIYGVIVAIIL) traverse the membrane as a helical segment. Over 86 to 108 (QTKLESVPSSKMYDAESLRAGYA) the chain is Lumenal. Residues 109 to 129 (IFASGIIVGFANLVCGLCVGI) traverse the membrane as a helical segment. Residues 130–147 (IGSSCALSDAQNSTLFVK) are Cytoplasmic-facing. The chain crosses the membrane as a helical span at residues 148-168 (ILVIEIFGSALGLFGVIVGII). At 169 to 178 (MSAQATWPTK) the chain is on the lumenal side.

It belongs to the V-ATPase proteolipid subunit family. V-ATPase is a heteromultimeric enzyme composed of a peripheral catalytic V1 complex (components A to H) attached to an integral membrane V0 proton pore complex (components: a, c, c'', d and e). The proteolipid components c and c'' are present as a hexameric ring that forms the proton-conducting pore. Interacts with APD2.

It localises to the endoplasmic reticulum membrane. The protein localises to the golgi apparatus membrane. Its function is as follows. Proton-conducting pore forming subunit of the membrane integral V0 complex of vacuolar ATPase. V-ATPase is responsible for acidifying a variety of intracellular compartments in eukaryotic cells. This chain is V-type proton ATPase subunit c''2 (VHA-c''2), found in Arabidopsis thaliana (Mouse-ear cress).